A 367-amino-acid polypeptide reads, in one-letter code: Histidinol-phosphate aminotransferase 1 (367 aa).

Lys-226 is modified (N6-(pyridoxal phosphate)lysine).

The protein belongs to the class-II pyridoxal-phosphate-dependent aminotransferase family. Histidinol-phosphate aminotransferase subfamily. Homodimer. Pyridoxal 5'-phosphate is required as a cofactor.

The enzyme catalyses L-histidinol phosphate + 2-oxoglutarate = 3-(imidazol-4-yl)-2-oxopropyl phosphate + L-glutamate. It participates in amino-acid biosynthesis; L-histidine biosynthesis; L-histidine from 5-phospho-alpha-D-ribose 1-diphosphate: step 7/9. The chain is Histidinol-phosphate aminotransferase 1 (hisC1) from Haemophilus influenzae (strain ATCC 51907 / DSM 11121 / KW20 / Rd).